The primary structure comprises 184 residues: Protein GrpE (184 aa).

The span at 1–17 (MQHEDKTPEQQENKTPE) shows a compositional bias: basic and acidic residues. The tract at residues 1 to 39 (MQHEDKTPEQQENKTPETELQQENAPATPQEAGAAGSID) is disordered. Polar residues predominate over residues 18–27 (TELQQENAPA).

The protein belongs to the GrpE family. In terms of assembly, homodimer.

Its subcellular location is the cytoplasm. Its function is as follows. Participates actively in the response to hyperosmotic and heat shock by preventing the aggregation of stress-denatured proteins, in association with DnaK and GrpE. It is the nucleotide exchange factor for DnaK and may function as a thermosensor. Unfolded proteins bind initially to DnaJ; upon interaction with the DnaJ-bound protein, DnaK hydrolyzes its bound ATP, resulting in the formation of a stable complex. GrpE releases ADP from DnaK; ATP binding to DnaK triggers the release of the substrate protein, thus completing the reaction cycle. Several rounds of ATP-dependent interactions between DnaJ, DnaK and GrpE are required for fully efficient folding. This chain is Protein GrpE, found in Methylobacillus flagellatus (strain ATCC 51484 / DSM 6875 / VKM B-1610 / KT).